The following is a 67-amino-acid chain: Protein DsrB (67 aa).

The protein belongs to the DsrB family.

The sequence is that of Protein DsrB from Pectobacterium carotovorum subsp. carotovorum (strain PC1).